The sequence spans 234 residues: Sperm flagellar protein 1 (234 aa).

Residues 7–112 enclose the Calponin-homology (CH) domain; sequence EEALHQLYLW…VLIPLRQRLE (106 aa). The essential for homodimerization and microtubule bundling activity stretch occupies residues 181 to 234; sequence VLQIAEKEQELLASQETVQVLQMKVKRLEHLLQLKNVRIDDLSRRLQQAERKQR.

In terms of assembly, homodimer. Interacts with actin, TJP1, CGN and CDH1. In terms of tissue distribution, expressed predominantly in the seminiferous epithelium of adult testis. Expressed in pillar cells of the organ of Corti (at protein level). Expressed in brain, kidney, lung and testis. Highly expressed in the trachea, lung and oviduct.

It is found in the cytoplasm. Its subcellular location is the cell projection. The protein resides in the cilium. The protein localises to the flagellum. It localises to the cytoskeleton. It is found in the cilium axoneme. Its subcellular location is the apical cell membrane. The protein resides in the basolateral cell membrane. The protein localises to the stress fiber. It localises to the microvillus. It is found in the lamellipodium. Its subcellular location is the filopodium. Microtubule-associated protein that promotes microtubule bundling and stabilizes microtubules against depolymerization in response to cold shock. Microtubule-associated protein involved in the stabilization of microtubules along the axis of migration during radial intercalation. Promotes the establishment and stabilization of an axis of microtubules required for the active migration of cells into the outer epithelium. Essential for ciliary central apparatus formation which requires both its microtubule-binding and bundling activities and for ciliary localization of HYDIN and SPAG6 in ependymal cilia. Binds actin in intestinal epithelial cells (IECs), essential for IECs survival and contributes to formation of filopodia and lamellipodia in migrating IECs. Regulates planar cell polarity signaling pathway and asymmetric microtubule accumulation in ciliated epithelia. The chain is Sperm flagellar protein 1 (Spef1) from Mus musculus (Mouse).